The sequence spans 330 residues: Ribosomal RNA small subunit methyltransferase C (330 aa).

It belongs to the methyltransferase superfamily. RsmC family. Monomer.

The protein localises to the cytoplasm. The enzyme catalyses guanosine(1207) in 16S rRNA + S-adenosyl-L-methionine = N(2)-methylguanosine(1207) in 16S rRNA + S-adenosyl-L-homocysteine + H(+). Specifically methylates the guanine in position 1207 of 16S rRNA in the 30S particle. This Haemophilus influenzae (strain ATCC 51907 / DSM 11121 / KW20 / Rd) protein is Ribosomal RNA small subunit methyltransferase C.